Here is a 139-residue protein sequence, read N- to C-terminus: Small ribosomal subunit protein uS12m (139 aa).

The N-terminal 29 residues, 1–29 (MSWSGLLRGLSMSLNYGLALAPRPWGTRP), are a transit peptide targeting the mitochondrion. The interval 37 to 57 (HRRGPPKFPPSKPGPTEGRPQ) is disordered.

It belongs to the universal ribosomal protein uS12 family. Component of the mitochondrial ribosome small subunit (28S) which comprises a 12S rRNA and about 30 distinct proteins.

It localises to the mitochondrion. This is Small ribosomal subunit protein uS12m (MRPS12) from Bos taurus (Bovine).